The sequence spans 280 residues: Meiotic driver wtf35 (280 aa).

Over residues 1–29 (MKNKDYPLRTSMDELSTKNDNEIDLEKGP) the composition is skewed to basic and acidic residues. Disordered regions lie at residues 1-49 (MKNK…DLNN) and 64-100 (NKST…GTTD). Helical transmembrane passes span 105-125 (FLIK…PAVC), 142-162 (WTLI…SWYF), 184-204 (IPMA…PRVA), and 218-238 (SLAD…VETV).

This sequence belongs to the WTF family. In terms of assembly, homomer. Forms protein aggregates. The two isoforms can interact with each other and with themselves. High sequence similarity is required for their interaction.

The protein localises to the spore membrane. It is found in the vacuole membrane. It localises to the ascus epiplasm. The protein resides in the cytoplasm. Its subcellular location is the endoplasmic reticulum membrane. Its function is as follows. Promotes unequal transmission of alleles from the parental zygote to progeny spores by acting as poison/antidote system where the poison and antidote proteins are produced from the same locus; the poison component is trans-acting and targets all spores within an ascus whereas the antidote component is spore-specific, leading to poisoning of all progeny that do not inherit the allele. Functionally, localizes isoform 2 to the vacuole thereby facilitating its degradation. Forms toxic aggregates that disrupt spore maturation. The sequence is that of Meiotic driver wtf35 from Schizosaccharomyces pombe (Fission yeast).